Consider the following 197-residue polypeptide: dTTP/UTP pyrophosphatase (197 aa).

Catalysis depends on aspartate 70, which acts as the Proton acceptor.

Belongs to the Maf family. YhdE subfamily. The cofactor is a divalent metal cation.

It is found in the cytoplasm. The catalysed reaction is dTTP + H2O = dTMP + diphosphate + H(+). It carries out the reaction UTP + H2O = UMP + diphosphate + H(+). Its function is as follows. Nucleoside triphosphate pyrophosphatase that hydrolyzes dTTP and UTP. May have a dual role in cell division arrest and in preventing the incorporation of modified nucleotides into cellular nucleic acids. This chain is dTTP/UTP pyrophosphatase, found in Pectobacterium atrosepticum (strain SCRI 1043 / ATCC BAA-672) (Erwinia carotovora subsp. atroseptica).